Reading from the N-terminus, the 324-residue chain is Adipolin (324 aa).

Positions 1 to 24 are cleaved as a signal peptide; that stretch reads MRCWVWLLVAIVLCQQLSVVRVLA. 2 disordered regions span residues 28–66 and 83–121; these read ERKK…DPGL and GANS…MPGA. Polar residues predominate over residues 40–49; the sequence is EPFNVSLSNS. N43 is a glycosylation site (N-linked (GlcNAc...) asparagine). A compositionally biased stretch (basic and acidic residues) spans 50–60; it reads EELHETDKLSE. The span at 86–98 shows a compositional bias: basic residues; the sequence is SKKKCKGKDKKLR. Positions 103–118 are enriched in pro residues; that stretch reads PPGPPGPQGPPGPPGM. The C1q domain maps to 169–324; sequence YRRVDEGFHC…SDFMGILMGL (156 aa).

This sequence belongs to the adipolin/erythroferrone family. As to quaternary structure, homomultimer; disulfide-linked.

Its subcellular location is the secreted. In terms of biological role, insulin-sensitizing adipocyte-secreted protein (adipokine) that regulates glucose metabolism in liver and adipose tissue. The protein is Adipolin (c1qtnf12) of Xenopus tropicalis (Western clawed frog).